Consider the following 920-residue polypeptide: Isoleucine--tRNA ligase (920 aa).

The 'HIGH' region motif lies at 57 to 67 (PYANGDIHLGH). Position 560 (Glu560) interacts with L-isoleucyl-5'-AMP. Residues 601-605 (KMSKS) carry the 'KMSKS' region motif. Residue Lys604 participates in ATP binding. Residues Cys890, Cys893, Cys910, and Cys913 each contribute to the Zn(2+) site.

It belongs to the class-I aminoacyl-tRNA synthetase family. IleS type 1 subfamily. Monomer. Requires Zn(2+) as cofactor.

The protein localises to the cytoplasm. It carries out the reaction tRNA(Ile) + L-isoleucine + ATP = L-isoleucyl-tRNA(Ile) + AMP + diphosphate. Catalyzes the attachment of isoleucine to tRNA(Ile). As IleRS can inadvertently accommodate and process structurally similar amino acids such as valine, to avoid such errors it has two additional distinct tRNA(Ile)-dependent editing activities. One activity is designated as 'pretransfer' editing and involves the hydrolysis of activated Val-AMP. The other activity is designated 'posttransfer' editing and involves deacylation of mischarged Val-tRNA(Ile). The polypeptide is Isoleucine--tRNA ligase (Caldicellulosiruptor bescii (strain ATCC BAA-1888 / DSM 6725 / KCTC 15123 / Z-1320) (Anaerocellum thermophilum)).